The chain runs to 238 residues: MRPSRRANDEMRAVSFERGVLRHAEGSCLVKFGDTHVLVAATLEERLPPWLKGQGRGWVTAEYSMLPRATLERTRREATTGKQSGRTQEIQRLIGRSLRSVTDLVGLGERQITLDCDVLQADGGTRTAAITGAWVALHDCLNWMYQRSMLKTIPLKENVAAISCGIHEGTPVLDLDYAEDSKAETDANFVMTGTGGIVEIQGTAEKTPFSQDELLSLLALARKGVGELVELQKQAIKA.

Residues Arg86 and 124-126 contribute to the phosphate site; that span reads GTR.

The protein belongs to the RNase PH family. Homohexameric ring arranged as a trimer of dimers.

It catalyses the reaction tRNA(n+1) + phosphate = tRNA(n) + a ribonucleoside 5'-diphosphate. In terms of biological role, phosphorolytic 3'-5' exoribonuclease that plays an important role in tRNA 3'-end maturation. Removes nucleotide residues following the 3'-CCA terminus of tRNAs; can also add nucleotides to the ends of RNA molecules by using nucleoside diphosphates as substrates, but this may not be physiologically important. Probably plays a role in initiation of 16S rRNA degradation (leading to ribosome degradation) during starvation. The polypeptide is Ribonuclease PH (Azorhizobium caulinodans (strain ATCC 43989 / DSM 5975 / JCM 20966 / LMG 6465 / NBRC 14845 / NCIMB 13405 / ORS 571)).